A 427-amino-acid chain; its full sequence is MTEAMKITLSTQPADARWGEKATYSINNDGITLHLNGADDLGLIQRAARKIDGLGIKHVQLSGEGWDADRCWAFWQGYKGPKGTRKVEWPDLDDAQRQELDNRLMIIDWVRDTINAPAEELGPSQLAQRAVDLISNVAGDRVTYRITKGEDLREQGYMGLHTVGRGSERSPVLLALDYNPTGDKEAPVYACLVGKGITFDSGGYSIKQTAFMDSMKSDMGGAATVTGALAFAITRGLNKRVKLFLCCADNLISGNAFKLGDIITYRNGKKVEVMNTDAEGRLVLADGLIDASAQKPEMIIDAATLTGAAKTALGNDYHALFSFDDALAGRLLASASQENEPFWRLPLAEFHRSQLPSNFAELNNTGSAAYPAGASTAAGFLSHFVENYQQGWLHIDCSATYRKAPVEQWSAGATGLGVRTIANLLTA.

Lysine 195 and aspartate 200 together coordinate Mn(2+). Lysine 207 is a catalytic residue. Residues aspartate 218, aspartate 277, and glutamate 279 each contribute to the Mn(2+) site. Arginine 281 is a catalytic residue.

The protein belongs to the peptidase M17 family. Homohexamer. It depends on Mn(2+) as a cofactor.

The protein localises to the cytoplasm. It catalyses the reaction Release of an N-terminal amino acid, Xaa, from a peptide or arylamide. Xaa is preferably Glu or Asp but may be other amino acids, including Leu, Met, His, Cys and Gln.. Functionally, probably plays an important role in intracellular peptide degradation. The sequence is that of Peptidase B from Shigella flexneri serotype 5b (strain 8401).